Here is a 200-residue protein sequence, read N- to C-terminus: Protein DMP7 (200 aa).

The next 4 membrane-spanning stretches (helical) occupy residues 37–57, 69–89, 129–149, and 167–187; these read LSNL…PVLT, WLTC…SFTD, ILDF…SMFD, and ILTS…LAFP.

Belongs to the plant DMP1 protein family. In terms of tissue distribution, expressed in leaves, stems, flowers, siliques and roots, especially in the vasculature.

It localises to the endoplasmic reticulum membrane. Involved in membrane remodeling. This chain is Protein DMP7, found in Arabidopsis thaliana (Mouse-ear cress).